Consider the following 441-residue polypeptide: Trigger factor (441 aa).

In terms of domain architecture, PPIase FKBP-type spans 175-260; that stretch reads GDKVVIDYNS…LVSIMVPKDV (86 aa).

It belongs to the FKBP-type PPIase family. Tig subfamily.

The protein resides in the cytoplasm. It catalyses the reaction [protein]-peptidylproline (omega=180) = [protein]-peptidylproline (omega=0). Involved in protein export. Acts as a chaperone by maintaining the newly synthesized protein in an open conformation. Functions as a peptidyl-prolyl cis-trans isomerase. The polypeptide is Trigger factor (Anaplasma marginale (strain St. Maries)).